The chain runs to 1076 residues: MKSPLLGLVVWSLLLQLLQPGLAFWNSQISQNCHNGSYEITVLMMNNYAFQESLESLKTAVNKGLDIVKQRLQEAALYVTVNATFIHSDGLIHKSGDCRSSTCEGLDLLREIARQKRMGCALMGPSCTYSTYQMYLDTELNYPMISAGSFGLSCDHKETLTRMMSPARKLMYFLVDFWKASNLPFKSFSWNTSYVFKNGTESEHCFWYINALEAGVSYFSQVLGFKEMLRGNEELQKILKDPNRRSNVIVMCGTPQTMESLKIDWTATEDTVIILVDLFNNYYLEENATAPDYMKNVLVLTLPPGNSTINTSLSKESLQEFSDFALAYLDGILLFGHMLKTFLRNGENTTAHKFAHAFRNLTFEGSTGPVTLDDSGDIDNTMVLLYTSVDTKKFKPLLFYDTRINQTTPIDTHPTFIWKNHRLPHDIPGLGPHILLIAVCTLAGVVVLILLIALLVLRKYKKDNELRQKKWSHIPPEKILPLETNEANHVSLKIDDDKKRDTVQRLRQCKYDPKRAILKDLKYSDGNFSEKQKIELDKLLPSDFYSLTKFYGTVKLDTRIFGVIEYCERGSLREVLNETISYPDGTIMGWEFKISVLYDIAKGMSYLHSSKIEVHGRLKSTNCVVDSRMVVKITDFGYNSILPPKKDLWTAPEHLRQASTSQKGDVYSFGIIAQEIIMRRETFYTLSCRDQKEKIFRVEHPDGLKPFRPDLFLETAEEKELEVFLLVKNCWEEDPEKRPDFKKIENTLAKIFGLFHDQKNESYMDTLIRRLQLYSRNLEHLVEERTQLYKAERDRADRLNFMLLPRPVVQSLKEKGIVEPELYEEVTVYFSDIVGFTTICKYSTPMEVVDMLNDLYKSFDQIVDHHDVHKVETIGDAYVVASGLPTRNGNRHAIDISKMALDILSFIGTFELEHLPGLPVWIRIGVHSGPCAAGVVGIKIPRYCLFGDTVNTASRMESTGLPLRIHMSSSTIAILKRVQCQFLYEMRGETYLKGKGTETTYCLTGMKDQEYNLPTPPTVENQQRLQAEFSDMITNSLQKRQATGIKSRKPARVASYKKGTLEYLQLNTTDQDSTYF.

An N-terminal signal peptide occupies residues 1 to 23 (MKSPLLGLVVWSLLLQLLQPGLA). At 24–433 (FWNSQISQNC…PHDIPGLGPH (410 aa)) the chain is on the extracellular side. 9 N-linked (GlcNAc...) asparagine glycosylation sites follow: N35, N82, N191, N198, N287, N306, N310, N348, and N405. A helical membrane pass occupies residues 434 to 457 (ILLIAVCTLAGVVVLILLIALLVL). At 458 to 1076 (RKYKKDNELR…NTTDQDSTYF (619 aa)) the chain is on the cytoplasmic side. Residues 492-752 (LKIDDDKKRD…KIENTLAKIF (261 aa)) form the Protein kinase domain. In terms of domain architecture, Guanylate cyclase spans 827 to 957 (TVYFSDIVGF…DTVNTASRME (131 aa)).

Belongs to the adenylyl cyclase class-4/guanylyl cyclase family. In terms of assembly, homotrimer. Interacts via its C-terminal region with NHERF4. Interacts with the lectin chaperone VIP36. Glycosylation at Asn-62 is required for interaction with VIP36 while glycosylation at Asn-348 and Asn-405 modulates ligand-mediated GC-C activation.

It is found in the cell membrane. It localises to the endoplasmic reticulum membrane. The enzyme catalyses GTP = 3',5'-cyclic GMP + diphosphate. Guanylyl cyclase that catalyzes synthesis of cyclic GMP (cGMP) from GTP. The chain is Guanylyl cyclase C (GUCY2C) from Cavia porcellus (Guinea pig).